The following is a 511-amino-acid chain: Serine/threonine-protein kinase Nek3 (511 aa).

An N-acetylmethionine modification is found at methionine 1. The interval 1–282 is interaction with VAV2; that stretch reads MDNYTVLRVI…EQILDEIKIS (282 aa). In terms of domain architecture, Protein kinase spans 4–255; it reads YTVLRVIGQG…ATTLLCRGSL (252 aa). ATP contacts are provided by residues 10–18 and lysine 33; that span reads IGQGSFGRA. The active-site Proton acceptor is the aspartate 125. Threonine 159 is modified (phosphothreonine; by autocatalysis). 2 disordered regions span residues 299 to 370 and 443 to 511; these read LGEA…GPSS and GPLS…GERA. The segment covering 309–321 has biased composition (basic and acidic residues); the sequence is EEERGRKCSHTEL. The segment covering 472–485 has biased composition (acidic residues); it reads LDEEDTDFEEDNEN. Threonine 477 is modified (phosphothreonine). Over residues 498-511 the composition is skewed to gly residues; the sequence is YGDGPGGQLLGERA.

Belongs to the protein kinase superfamily. NEK Ser/Thr protein kinase family. NIMA subfamily. Interacts with PXN, PRLR, VAV1 and VAV2 and this interaction is prolactin-dependent. Mg(2+) is required as a cofactor. In terms of processing, phosphorylation at Thr-477 regulates its catalytic activity. In terms of tissue distribution, brain.

Its subcellular location is the cytoplasm. The protein localises to the cell projection. It is found in the axon. The enzyme catalyses L-seryl-[protein] + ATP = O-phospho-L-seryl-[protein] + ADP + H(+). It catalyses the reaction L-threonyl-[protein] + ATP = O-phospho-L-threonyl-[protein] + ADP + H(+). Its function is as follows. Protein kinase which influences neuronal morphogenesis and polarity through effects on microtubules. Regulates microtubule acetylation in neurons. Contributes to prolactin-mediated phosphorylation of PXN and VAV2. The polypeptide is Serine/threonine-protein kinase Nek3 (Nek3) (Mus musculus (Mouse)).